Here is a 225-residue protein sequence, read N- to C-terminus: MNSIEFPLLDRTTQNSVISTTPNDLSNWSRLSSLWPLLYGTSCCFIEFASLIGSRFDFDRYGLVPRSSPRQADLILTAGTVTMKMAPSLVRLYEQMPEPKYVIAMGACTITGGMFSTDSYSTVRGVDKLIPVDVYLPGCPPKPEAVIDAITKLRKKVSREIYEDRIWPQQESRCFTTNHKFHVGRSTHTGNYDQGLLYQSPSTSEIPSEIFFKYKSSVSSHELVN.

4 residues coordinate [4Fe-4S] cluster: Cys-43, Cys-44, Cys-108, and Cys-139.

It belongs to the complex I 20 kDa subunit family. As to quaternary structure, NDH is composed of at least 16 different subunits, 5 of which are encoded in the nucleus. Requires [4Fe-4S] cluster as cofactor.

Its subcellular location is the plastid. It is found in the chloroplast thylakoid membrane. It carries out the reaction a plastoquinone + NADH + (n+1) H(+)(in) = a plastoquinol + NAD(+) + n H(+)(out). It catalyses the reaction a plastoquinone + NADPH + (n+1) H(+)(in) = a plastoquinol + NADP(+) + n H(+)(out). Its function is as follows. NDH shuttles electrons from NAD(P)H:plastoquinone, via FMN and iron-sulfur (Fe-S) centers, to quinones in the photosynthetic chain and possibly in a chloroplast respiratory chain. The immediate electron acceptor for the enzyme in this species is believed to be plastoquinone. Couples the redox reaction to proton translocation, and thus conserves the redox energy in a proton gradient. The chain is NAD(P)H-quinone oxidoreductase subunit K, chloroplastic from Platanus occidentalis (Sycamore).